The sequence spans 398 residues: uncharacterized protein (398 aa).

This is an uncharacterized protein from Ostreid herpesvirus 1 (isolate France) (OsHV-1).